A 365-amino-acid chain; its full sequence is S-adenosylmethionine:tRNA ribosyltransferase-isomerase (365 aa).

Belongs to the QueA family. As to quaternary structure, monomer.

It is found in the cytoplasm. It catalyses the reaction 7-aminomethyl-7-carbaguanosine(34) in tRNA + S-adenosyl-L-methionine = epoxyqueuosine(34) in tRNA + adenine + L-methionine + 2 H(+). Its pathway is tRNA modification; tRNA-queuosine biosynthesis. Functionally, transfers and isomerizes the ribose moiety from AdoMet to the 7-aminomethyl group of 7-deazaguanine (preQ1-tRNA) to give epoxyqueuosine (oQ-tRNA). In Rickettsia conorii (strain ATCC VR-613 / Malish 7), this protein is S-adenosylmethionine:tRNA ribosyltransferase-isomerase.